A 1380-amino-acid polypeptide reads, in one-letter code: Receptor-type adenylate cyclase A (1380 aa).

Over 1-34 the chain is Cytoplasmic; it reads MAMQIRPSLGGCLRHGGAGDHAARRLSRLRAAKV. A helical membrane pass occupies residues 35–55; that stretch reads FVPTAVVCVLLCCAPWVMAEI. The Extracellular segment spans residues 56–891; sequence TNDAEREPVY…SHALTPAQRN (836 aa). N-linked (GlcNAc...) asparagine glycosylation is found at N422, N478, N497, and N567. Residues 892 to 912 form a helical membrane-spanning segment; that stretch reads GLIAGCVVGAVVLIATCTLLL. The Cytoplasmic portion of the chain corresponds to 913-1380; sequence YCCMDNRNND…NPHYARHAFE (468 aa). In terms of domain architecture, Guanylate cyclase spans 933–1087; the sequence is TLLFTDIESS…DTSNMAARTE (155 aa). Positions 938 and 981 each coordinate Mg(2+). The tract at residues 1270 to 1298 is disordered; it reads LAREGDSAAGGVRPRLPGSPVTSLPAGGS.

Belongs to the adenylyl cyclase class-3 family. The cofactor is Mg(2+).

The protein localises to the membrane. The catalysed reaction is ATP = 3',5'-cyclic AMP + diphosphate. Could act as a receptor for an unknown ligand. The polypeptide is Receptor-type adenylate cyclase A (RAC-A) (Leishmania donovani).